A 424-amino-acid chain; its full sequence is Vasopressin V1a receptor (424 aa).

A disordered region spans residues 1–40 (MSFPRGSQDRSVGNSSPWWPLTTEGSNGSQEAARLGEGDS). The Extracellular segment spans residues 1–52 (MSFPRGSQDRSVGNSSPWWPLTTEGSNGSQEAARLGEGDSPLGDVRNEELAK). Positions 9–30 (DRSVGNSSPWWPLTTEGSNGSQ) are enriched in polar residues. The N-linked (GlcNAc...) asparagine glycan is linked to asparagine 27. The helical transmembrane segment at 53–76 (LEIAVLAVIFVVAVLGNSSVLLAL) threads the bilayer. The Cytoplasmic portion of the chain corresponds to 77–88 (HRTPRKTSRMHL). The helical transmembrane segment at 89-110 (FIRHLSLADLAVAFFQVLPQLC) threads the bilayer. The Extracellular segment spans residues 111 to 125 (WDITYRFRGPDWLCR). A disulfide bridge links cysteine 124 with cysteine 205. The chain crosses the membrane as a helical span at residues 126 to 147 (VVKHLQVFAMFASAYMLVVMTA). Topologically, residues 148 to 168 (DRYIAVCHPLKTLQQPARRSR) are cytoplasmic. The helical transmembrane segment at 169 to 190 (LMIATSWVLSFILSTPQYFIFS) threads the bilayer. Over 191 to 220 (VIEIEVNNGTKTQDCWATFIQPWGTRAYVT) the chain is Extracellular. The chain crosses the membrane as a helical span at residues 221–241 (WMTSGVFVAPVVVLGTCYGFI). The Cytoplasmic segment spans residues 242–299 (CYHIWRNIRGKTASSRHSKGDKGSGEAVGPFHKGLLVTPCVSSVKSISRAKIRTVKMT). A helical transmembrane segment spans residues 300 to 319 (FVIVSAYILCWAPFFIVQMW). Residues 320–337 (SVWDENFIWTDSENPSIT) lie on the Extracellular side of the membrane. The chain crosses the membrane as a helical span at residues 338-357 (ITALLASLNSCCNPWIYMFF). The Cytoplasmic segment spans residues 358–424 (SGHLLQDCVQ…KSIRFIPVST (67 aa)). Residues cysteine 371 and cysteine 372 are each lipidated (S-palmitoyl cysteine). Residues 383–416 (DSDSMSRRQTSYSNNRSPTNSTGMWKDSPKSSKS) are disordered. Residues 389 to 405 (RRQTSYSNNRSPTNSTG) are compositionally biased toward polar residues. Serine 410 carries the post-translational modification Phosphoserine.

Belongs to the G-protein coupled receptor 1 family. Vasopressin/oxytocin receptor subfamily. Palmitoylated on three cysteine residues, of which only two are identified. Localized within gonadotropes of the anterior pituitary of the brain. Broadly distributed throughout the cerebral cortex.

It is found in the cell membrane. The protein localises to the cytoplasmic vesicle membrane. Receptor for arginine vasopressin. The activity of this receptor is mediated by G proteins which activate a phosphatidyl-inositol-calcium second messenger system. Involved in social memory formation. This chain is Vasopressin V1a receptor (Avpr1a), found in Rattus norvegicus (Rat).